Reading from the N-terminus, the 68-residue chain is Large ribosomal subunit protein uL29 (68 aa).

This sequence belongs to the universal ribosomal protein uL29 family.

In Streptococcus gordonii (strain Challis / ATCC 35105 / BCRC 15272 / CH1 / DL1 / V288), this protein is Large ribosomal subunit protein uL29.